Reading from the N-terminus, the 146-residue chain is Cytochrome c oxidase subunit 5A, mitochondrial (146 aa).

Residues 1–37 (MLAAALRRCTAAAAARGLLHPASAPSPAAAVCSIRCY) constitute a mitochondrion transit peptide. The short motif at 2–16 (LAAALRRCTAAAAAR) is the SIFI-degron element. Residues K83 and K109 each carry the N6-acetyllysine modification. T137 is subject to Phosphothreonine.

The protein belongs to the cytochrome c oxidase subunit 5A family. In terms of assembly, component of the cytochrome c oxidase (complex IV, CIV), a multisubunit enzyme composed of 14 subunits. The complex is composed of a catalytic core of 3 subunits MT-CO1, MT-CO2 and MT-CO3, encoded in the mitochondrial DNA, and 11 supernumerary subunits COX4I, COX5A, COX5B, COX6A, COX6B, COX6C, COX7A, COX7B, COX7C, COX8 and NDUFA4, which are encoded in the nuclear genome. The complex exists as a monomer or a dimer and forms supercomplexes (SCs) in the inner mitochondrial membrane with NADH-ubiquinone oxidoreductase (complex I, CI) and ubiquinol-cytochrome c oxidoreductase (cytochrome b-c1 complex, complex III, CIII), resulting in different assemblies (supercomplex SCI(1)III(2)IV(1) and megacomplex MCI(2)III(2)IV(2)). Interacts with AFG1L. Interacts with RAB5IF. In response to mitochondrial stress, the precursor protein is ubiquitinated by the SIFI complex in the cytoplasm before mitochondrial import, leading to its degradation. Within the SIFI complex, UBR4 initiates ubiquitin chain that are further elongated or branched by KCMF1.

The protein resides in the mitochondrion inner membrane. It participates in energy metabolism; oxidative phosphorylation. In terms of biological role, component of the cytochrome c oxidase, the last enzyme in the mitochondrial electron transport chain which drives oxidative phosphorylation. The respiratory chain contains 3 multisubunit complexes succinate dehydrogenase (complex II, CII), ubiquinol-cytochrome c oxidoreductase (cytochrome b-c1 complex, complex III, CIII) and cytochrome c oxidase (complex IV, CIV), that cooperate to transfer electrons derived from NADH and succinate to molecular oxygen, creating an electrochemical gradient over the inner membrane that drives transmembrane transport and the ATP synthase. Cytochrome c oxidase is the component of the respiratory chain that catalyzes the reduction of oxygen to water. Electrons originating from reduced cytochrome c in the intermembrane space (IMS) are transferred via the dinuclear copper A center (CU(A)) of subunit 2 and heme A of subunit 1 to the active site in subunit 1, a binuclear center (BNC) formed by heme A3 and copper B (CU(B)). The BNC reduces molecular oxygen to 2 water molecules using 4 electrons from cytochrome c in the IMS and 4 protons from the mitochondrial matrix. The chain is Cytochrome c oxidase subunit 5A, mitochondrial (Cox5a) from Mus musculus (Mouse).